The following is a 35-amino-acid chain: Delta-theraphotoxin-Hm1a (35 aa).

3 disulfide bridges follow: cysteine 2-cysteine 16, cysteine 9-cysteine 21, and cysteine 15-cysteine 28.

This sequence belongs to the neurotoxin 10 (Hwtx-1) family. 09 (HaTx) subfamily. In terms of tissue distribution, expressed by the venom gland.

It is found in the secreted. Gating-modifier toxin that potently inhibits inactivation of the mammalian Nav1.1/SCN1A sodium channel (EC(50)=38 nM). Also moderately inhibits inactivation of Nav1.2/SCN2A (EC(50)=236 nM) and Nav1.3/SCN3A (EC(50)=220 nM) when the channels are expressed in oocytes without the beta-1 auxiliary subunit. Does not inhibit inactivation of Nav1.2/SCN2A when the channel is coexpressed with the beta-1 auxiliary subunit. When tested on Nav1.1/SCN1A channel, it enhances peak current amplitude and potently delays channel inactivation in a dose-dependent manner, leading to a large sustained current. It has no effect on the voltage-dependence of steady-state activation, and induces a depolarizing shift in the voltage dependence of inactivation. In addition, it does not modify the recovery from fast inactivation in Nav1.1/SCN1A. The binding affinity and subtype selectivity of the toxin towards Nav1.1/SCN1A channel is determined by residues within both the S1-S2 and S3-S4 loops of the domain IV voltage sensor of the channel. This toxin also weakly inhibits several subtypes of voltage-gated potassium channels. It moderately blocks Kv2.1/KCNB1 (23% inhibition at 100 nM), Kv2.2/KCNB2 (19.7% at 100 nM and 51% at 300 nM), Kv4.1/KCND1 (IC(50)=280 nM), Kv4.2/KCND2 (39% at 300 nM) and Kv4.3/KCND3 (43% at 300 nM). In vivo, intracerebroventricular injection into mice elicits convulsions, spasms, tremors and rapid death. When injected into mouse hindpaw, the toxin elicits an immediate and robust response to pain. However, intraplantar injection of toxin does not cause neurogenic inflammation or alter sensitivity to heat, indicative of a modality-specific effect on mechanosensitive neurons. In Dravet syndrome mice model, intracerebroventricular infusion of this peptide rescues mice from seizures and premature death. The protein is Delta-theraphotoxin-Hm1a of Heteroscodra maculata (Togo starburst tarantula).